The primary structure comprises 131 residues: Large ribosomal subunit protein bL17 (131 aa).

Belongs to the bacterial ribosomal protein bL17 family. As to quaternary structure, part of the 50S ribosomal subunit. Contacts protein L32.

The protein is Large ribosomal subunit protein bL17 of Shewanella amazonensis (strain ATCC BAA-1098 / SB2B).